A 296-amino-acid chain; its full sequence is Putative peptide transport system permease protein BRA1093/BS1330_II1085 (296 aa).

6 helical membrane-spanning segments follow: residues 35–55 (IGLVLLLIVVLAAVLAPWITN), 97–117 (LWIGLTVAVLSAILGAIIGIA), 131–151 (VMDALMAFPAILLAIGISAAL), 205–225 (ILPNCLAPLLVTLTFVFAYAI), 229–249 (ATLSFLGIGTPPPHASWGSIV), and 260–280 (WWIMLFPGIAITISALAINLI). Residues 97–281 (LWIGLTVAVL…ISALAINLIG (185 aa)) enclose the ABC transmembrane type-1 domain.

Belongs to the binding-protein-dependent transport system permease family. As to quaternary structure, the complex is composed of two ATP-binding proteins (BRA1094), two transmembrane proteins (BRA1092 and BRA1093) and a solute-binding protein (BRA1090).

The protein localises to the cell inner membrane. In terms of biological role, probably part of an ABC transporter complex that could be involved in peptide import. Probably responsible for the translocation of the substrate across the membrane. The polypeptide is Putative peptide transport system permease protein BRA1093/BS1330_II1085 (Brucella suis biovar 1 (strain 1330)).